Reading from the N-terminus, the 64-residue chain is uncharacterized protein (64 aa).

The span at 1 to 14 shows a compositional bias: polar residues; it reads MFNFDPTDQPTDQH. The disordered stretch occupies residues 1 to 42; it reads MFNFDPTDQPTDQHLLQLPTDPHPLQQPIDPHPPPQPNNNLP.

This is an uncharacterized protein from Dictyostelium discoideum (Social amoeba).